The primary structure comprises 66 residues: Large ribosomal subunit protein uL30 (66 aa).

It belongs to the universal ribosomal protein uL30 family. Part of the 50S ribosomal subunit.

The polypeptide is Large ribosomal subunit protein uL30 (Azorhizobium caulinodans (strain ATCC 43989 / DSM 5975 / JCM 20966 / LMG 6465 / NBRC 14845 / NCIMB 13405 / ORS 571)).